A 317-amino-acid polypeptide reads, in one-letter code: D-alanine--D-alanine ligase (317 aa).

One can recognise an ATP-grasp domain in the interval 111–308 (KRFWNGIGIP…YASLVEKIAQ (198 aa)). 137–192 (EEQMSYPVIVKPSREGSTIGINKAMNRAELDDALIKALEYDSDILVEEFIDGPEFT) is an ATP binding site. 3 residues coordinate Mg(2+): aspartate 262, glutamate 275, and asparagine 277.

It belongs to the D-alanine--D-alanine ligase family. Requires Mg(2+) as cofactor. It depends on Mn(2+) as a cofactor.

Its subcellular location is the cytoplasm. It carries out the reaction 2 D-alanine + ATP = D-alanyl-D-alanine + ADP + phosphate + H(+). The protein operates within cell wall biogenesis; peptidoglycan biosynthesis. Functionally, cell wall formation. This Marinomonas sp. (strain MWYL1) protein is D-alanine--D-alanine ligase.